Reading from the N-terminus, the 492-residue chain is Alpha-2-antiplasmin (492 aa).

Residues 1-22 (MALLWGLLALILSCLSSLCSAQ) form the signal peptide. A propeptide spanning residues 23–40 (FSPVSTMEPLDLQLMDGQ) is cleaved from the precursor. A disordered region spans residues 56–76 (QEPGGQIAPKKAPEDCKLSPT). Cysteines 71 and 144 form a disulfide. Asn127, Asn249, Asn296, Asn310, and Asn317 each carry an N-linked (GlcNAc...) asparagine glycan. The disordered stretch occupies residues 433 to 492 (SVRNPNPGAQPERKEQQDSPDGKDSFQDHKGLPRGDKPFDPDLKLGPPSEEDYAQPSSPK). Residues 443-475 (PERKEQQDSPDGKDSFQDHKGLPRGDKPFDPDL) show a composition bias toward basic and acidic residues. Tyr485 carries the post-translational modification Sulfotyrosine.

This sequence belongs to the serpin family. In terms of assembly, forms protease inhibiting heterodimer with TMPRSS7. Post-translationally, proteolytically cleaved at Pro-31 by both the prolyl endopeptidase FAP form and antiplasmin-cleaving enzyme FAP soluble form to generate mature alpha-2-antiplasmin. Expressed by the liver and secreted in plasma.

It is found in the secreted. Functionally, serine protease inhibitor. The major targets of this inhibitor are plasmin and trypsin, but it also inactivates matriptase-3/TMPRSS7 and chymotrypsin. In Bos taurus (Bovine), this protein is Alpha-2-antiplasmin (SERPINF2).